Consider the following 492-residue polypeptide: Cholesteryl ester transfer protein (492 aa).

The N-terminal stretch at 1–17 (MLAVTLLSLALLGSTCA) is a signal peptide. Cysteine 160 and cysteine 201 are disulfide-bonded. The N-linked (GlcNAc...) asparagine glycan is linked to asparagine 257.

The protein belongs to the BPI/LBP/Plunc superfamily. BPI/LBP family.

It is found in the secreted. It catalyses the reaction cholesteryl (9Z-octadecenoate)(in) = cholesteryl (9Z-octadecenoate)(out). It carries out the reaction 1,2,3-tri-(9Z-octadecenoyl)-glycerol(in) = 1,2,3-tri-(9Z-octadecenoyl)-glycerol(out). The catalysed reaction is cholesteryl (9Z,12Z)-octadecadienoate(in) = cholesteryl (9Z,12Z)-octadecadienoate(out). In terms of biological role, involved in the transfer of neutral lipids, including cholesteryl ester and triglyceride, among lipoprotein particles. Allows the net movement of cholesteryl ester from high density lipoproteins/HDL to triglyceride-rich very low density lipoproteins/VLDL, and the equimolar transport of triglyceride from VLDL to HDL. Regulates the reverse cholesterol transport, by which excess cholesterol is removed from peripheral tissues and returned to the liver for elimination. The chain is Cholesteryl ester transfer protein from Cricetulus griseus (Chinese hamster).